Consider the following 282-residue polypeptide: Large ribosomal subunit protein uL2 (282 aa).

2 disordered regions span residues Lys31–Gly55 and Leu223–Arg282. Composition is skewed to basic residues over residues Thr34 to Gly55 and Val270 to Arg282.

The protein belongs to the universal ribosomal protein uL2 family. In terms of assembly, part of the 50S ribosomal subunit. Forms a bridge to the 30S subunit in the 70S ribosome.

Its function is as follows. One of the primary rRNA binding proteins. Required for association of the 30S and 50S subunits to form the 70S ribosome, for tRNA binding and peptide bond formation. It has been suggested to have peptidyltransferase activity; this is somewhat controversial. Makes several contacts with the 16S rRNA in the 70S ribosome. The chain is Large ribosomal subunit protein uL2 from Anaeromyxobacter dehalogenans (strain 2CP-C).